The following is a 452-amino-acid chain: Methionine aminopeptidase 2-1 (452 aa).

Positions 1–100 (MAAKVADDVA…VRIDEVFPND (100 aa)) are disordered. Residues 37–51 (EHDDSDDDNEAEDGA) are compositionally biased toward acidic residues. Over residues 60–73 (KKKKKRKPRKKKKA) the composition is skewed to basic residues. Histidine 205 is a substrate binding site. 3 residues coordinate a divalent metal cation: aspartate 225, aspartate 236, and histidine 305. Residue histidine 313 coordinates substrate. A divalent metal cation-binding residues include glutamate 338 and glutamate 433.

It belongs to the peptidase M24A family. Methionine aminopeptidase eukaryotic type 2 subfamily. The cofactor is Co(2+). Zn(2+) serves as cofactor. Requires Mn(2+) as cofactor. Fe(2+) is required as a cofactor.

It is found in the cytoplasm. The catalysed reaction is Release of N-terminal amino acids, preferentially methionine, from peptides and arylamides.. In terms of biological role, cotranslationally removes the N-terminal methionine from nascent proteins. The N-terminal methionine is often cleaved when the second residue in the primary sequence is small and uncharged (Met-Ala-, Cys, Gly, Pro, Ser, Thr, or Val). The protein is Methionine aminopeptidase 2-1 of Pyrenophora teres f. teres (strain 0-1) (Barley net blotch fungus).